A 248-amino-acid chain; its full sequence is 4-hydroxy-tetrahydrodipicolinate reductase (248 aa).

NAD(+) contacts are provided by residues Asp-32, Gly-74 to Thr-76, and Ser-99 to Phe-102. The Proton donor/acceptor role is filled by His-134. His-135 contributes to the (S)-2,3,4,5-tetrahydrodipicolinate binding site. The active-site Proton donor is the Lys-138. Gly-144 to Thr-145 provides a ligand contact to (S)-2,3,4,5-tetrahydrodipicolinate.

The protein belongs to the DapB family.

It is found in the cytoplasm. It carries out the reaction (S)-2,3,4,5-tetrahydrodipicolinate + NAD(+) + H2O = (2S,4S)-4-hydroxy-2,3,4,5-tetrahydrodipicolinate + NADH + H(+). The catalysed reaction is (S)-2,3,4,5-tetrahydrodipicolinate + NADP(+) + H2O = (2S,4S)-4-hydroxy-2,3,4,5-tetrahydrodipicolinate + NADPH + H(+). Its pathway is amino-acid biosynthesis; L-lysine biosynthesis via DAP pathway; (S)-tetrahydrodipicolinate from L-aspartate: step 4/4. Functionally, catalyzes the conversion of 4-hydroxy-tetrahydrodipicolinate (HTPA) to tetrahydrodipicolinate. The chain is 4-hydroxy-tetrahydrodipicolinate reductase from Chlorobium luteolum (strain DSM 273 / BCRC 81028 / 2530) (Pelodictyon luteolum).